The sequence spans 193 residues: Segregation and condensation protein B (193 aa).

The protein belongs to the ScpB family. As to quaternary structure, homodimer. Homodimerization may be required to stabilize the binding of ScpA to the Smc head domains. Component of a cohesin-like complex composed of ScpA, ScpB and the Smc homodimer, in which ScpA and ScpB bind to the head domain of Smc. The presence of the three proteins is required for the association of the complex with DNA.

It localises to the cytoplasm. Functionally, participates in chromosomal partition during cell division. May act via the formation of a condensin-like complex containing Smc and ScpA that pull DNA away from mid-cell into both cell halves. In Clostridium botulinum (strain 657 / Type Ba4), this protein is Segregation and condensation protein B.